The primary structure comprises 309 residues: Mannitol-1-phosphatase (309 aa).

His82 serves as the catalytic Tele-phosphohistidine intermediate. Glu166 (proton donor/acceptor) is an active-site residue.

This sequence belongs to the phosphoglycerate mutase family.

It catalyses the reaction D-mannitol 1-phosphate + H2O = D-mannitol + phosphate. By diethyl pyrocarbonate (DEPC). In terms of biological role, key enzyme for mannitol biosynthesis. The protein is Mannitol-1-phosphatase of Eimeria tenella (Coccidian parasite).